Reading from the N-terminus, the 636-residue chain is Sodium-dependent nutrient amino acid transporter 1 (636 aa).

The segment at 1-40 (MELKTMPQNGANNGNPQGNTSNNNNTNDSSNSNSNNNNKT) is disordered. Over 1–50 (MELKTMPQNGANNGNPQGNTSNNNNTNDSSNSNSNNNNKTERTNWSNGLE) the chain is Cytoplasmic. Residues 7–40 (PQNGANNGNPQGNTSNNNNTNDSSNSNSNNNNKT) show a composition bias toward low complexity. Helical transmembrane passes span 51 to 71 (FLMS…FPFT), 78 to 98 (GAFL…MYYL), and 131 to 151 (TICI…YLAV). N-linked (GlcNAc...) asparagine glycosylation occurs at Asn184. The next 9 membrane-spanning stretches (helical) occupy residues 225–245 (PDWK…LVIM), 254–274 (AAYF…GRAV), 303–323 (AVVQ…MFSS), 337–357 (IVTT…FAIL), 397–417 (LFSA…IVAL), 436–456 (VALV…TPGG), 469–489 (TYVV…IYGV), 511–531 (CWLI…MVTI), and 547–567 (VAGW…GWWY).

This sequence belongs to the sodium:neurotransmitter symporter (SNF) (TC 2.A.22) family.

It is found in the membrane. Functionally, unusual broad substrate spectrum amino acid:sodium cotransporter that promotes absorption of the D isomers of essential amino acids. Neutral amino acids are the preferred substrates, especially methionine and phenylalanine. The protein is Sodium-dependent nutrient amino acid transporter 1 of Drosophila grimshawi (Hawaiian fruit fly).